The primary structure comprises 249 residues: UPF0246 protein EUBREC_1226 (249 aa).

This sequence belongs to the UPF0246 family.

This Agathobacter rectalis (strain ATCC 33656 / DSM 3377 / JCM 17463 / KCTC 5835 / VPI 0990) (Eubacterium rectale) protein is UPF0246 protein EUBREC_1226.